A 318-amino-acid polypeptide reads, in one-letter code: Ferredoxin--NADP reductase (318 aa).

D33, Q41, Y46, V84, F115, D276, and T316 together coordinate FAD.

It belongs to the ferredoxin--NADP reductase type 2 family. As to quaternary structure, homodimer. The cofactor is FAD.

It catalyses the reaction 2 reduced [2Fe-2S]-[ferredoxin] + NADP(+) + H(+) = 2 oxidized [2Fe-2S]-[ferredoxin] + NADPH. The sequence is that of Ferredoxin--NADP reductase from Lactobacillus gasseri (strain ATCC 33323 / DSM 20243 / BCRC 14619 / CIP 102991 / JCM 1131 / KCTC 3163 / NCIMB 11718 / NCTC 13722 / AM63).